The chain runs to 299 residues: Glycerol-3-phosphate dehydrogenase [NAD(P)+] (299 aa).

Trp11, Arg30, His31, and Lys79 together coordinate NADPH. Lys79, Gly107, and Ser109 together coordinate sn-glycerol 3-phosphate. Ala111 contacts NADPH. Residues Lys161, Asp214, Ser224, Arg225, and Asn226 each contribute to the sn-glycerol 3-phosphate site. The active-site Proton acceptor is the Lys161. Residue Arg225 participates in NADPH binding. 2 residues coordinate NADPH: Val249 and Glu251.

This sequence belongs to the NAD-dependent glycerol-3-phosphate dehydrogenase family.

It is found in the cytoplasm. It catalyses the reaction sn-glycerol 3-phosphate + NAD(+) = dihydroxyacetone phosphate + NADH + H(+). The catalysed reaction is sn-glycerol 3-phosphate + NADP(+) = dihydroxyacetone phosphate + NADPH + H(+). It participates in membrane lipid metabolism; glycerophospholipid metabolism. In terms of biological role, catalyzes the reduction of the glycolytic intermediate dihydroxyacetone phosphate (DHAP) to sn-glycerol 3-phosphate (G3P), the key precursor for phospholipid synthesis. The protein is Glycerol-3-phosphate dehydrogenase [NAD(P)+] of Nitratiruptor sp. (strain SB155-2).